The sequence spans 346 residues: N-acetyl-gamma-glutamyl-phosphate reductase (346 aa).

C154 is a catalytic residue.

Belongs to the NAGSA dehydrogenase family. Type 1 subfamily.

The protein resides in the cytoplasm. It catalyses the reaction N-acetyl-L-glutamate 5-semialdehyde + phosphate + NADP(+) = N-acetyl-L-glutamyl 5-phosphate + NADPH + H(+). It participates in amino-acid biosynthesis; L-arginine biosynthesis; N(2)-acetyl-L-ornithine from L-glutamate: step 3/4. Its function is as follows. Catalyzes the NADPH-dependent reduction of N-acetyl-5-glutamyl phosphate to yield N-acetyl-L-glutamate 5-semialdehyde. This Rhodopirellula baltica (strain DSM 10527 / NCIMB 13988 / SH1) protein is N-acetyl-gamma-glutamyl-phosphate reductase.